A 37-amino-acid chain; its full sequence is Potassium channel toxin alpha-KTx 3.9 (37 aa).

Disulfide bonds link Cys-7-Cys-27, Cys-13-Cys-32, and Cys-17-Cys-34. Residues 25-32 (GKCMNRKC) are interaction with Ca(2+)-activated K(+) channels.

This sequence belongs to the short scorpion toxin superfamily. Potassium channel inhibitor family. Alpha-KTx 03 subfamily. In terms of tissue distribution, expressed by the venom gland.

Its subcellular location is the secreted. Binds and inhibits potassium channels. Intracerebroventricular injection into mice induces paralyzing symptoms followed by death. Its binding affinity to rat brain synaptosomes is 5-fold lower than this of KTX 1. This Buthus occitanus tunetanus (Common European scorpion) protein is Potassium channel toxin alpha-KTx 3.9 (KTX3).